The following is a 37-amino-acid chain: Large ribosomal subunit protein bL36c (37 aa).

This sequence belongs to the bacterial ribosomal protein bL36 family.

It is found in the plastid. It localises to the chloroplast. The sequence is that of Large ribosomal subunit protein bL36c from Chloranthus spicatus (Chulantree).